The primary structure comprises 216 residues: MKIIHLINSDIFIGNNKKFLNFSMKKYIIFTINNLNIFDLKKIIISVLLLKKYIKFIYKKKMKILFIGTKNFFRELIYKFSRSIRQPFVCNKWISGSLTNLQNYKKMINKLKIIRKKIKFKSYTKKEKISFLKKEKKIEILFGGFRNLKKTPKLIIISDINKDKIIVNEAKRLKIKIASFLDSSDNCSKIDFILPCNNNSINSIKIILNILFKNLC.

This sequence belongs to the universal ribosomal protein uS2 family.

The polypeptide is Small ribosomal subunit protein uS2 (Carsonella ruddii (strain PV)).